The primary structure comprises 1156 residues: DNA-directed RNA polymerase 133 kDa polypeptide (1156 aa).

It belongs to the RNA polymerase beta chain family. As to quaternary structure, the DNA-dependent RNA polymerase used for intermediate and late genes expression consists of eight subunits 147 kDa, 133 kDa, 35 kDa, 30 kDa, 22 kDa, 19 kDa, 18 kDa and 7 kDa totalling more than 500 kDa in mass. The same holoenzyme, with the addition of the transcription-specificity factor RAP94, is used for early gene expression.

It is found in the virion. The catalysed reaction is RNA(n) + a ribonucleoside 5'-triphosphate = RNA(n+1) + diphosphate. Part of the DNA-dependent RNA polymerase which catalyzes the transcription of viral DNA into RNA using the four ribonucleoside triphosphates as substrates. Responsible for the transcription of early, intermediate and late genes. DNA-dependent RNA polymerase associates with the early transcription factor (ETF), itself composed of D6 and A7, thereby allowing the early genes transcription. Late transcription, and probably also intermediate transcription, require newly synthesized RNA polymerase. In Homo sapiens (Human), this protein is DNA-directed RNA polymerase 133 kDa polypeptide (RPO132).